Here is a 188-residue protein sequence, read N- to C-terminus: UPF0461 protein C5orf24 (188 aa).

Residues 1–10 are compositionally biased toward polar residues; the sequence is MMHPVASSNP. The segment at 1 to 20 is disordered; the sequence is MMHPVASSNPAFCGPGKPSC. A Phosphoserine modification is found at serine 37. A Glycyl lysine isopeptide (Lys-Gly) (interchain with G-Cter in SUMO2) cross-link involves residue lysine 75. A disordered region spans residues 79 to 142; that stretch reads KKKKNLNRSG…GYKVSPGRPP (64 aa). The segment covering 80 to 92 has biased composition (basic residues); sequence KKKNLNRSGKRGR. A compositionally biased stretch (polar residues) spans 94-107; it reads SGTTKSAGYRTSTG. A phosphoserine mark is found at serine 121 and serine 180. Lysine 184 participates in a covalent cross-link: Glycyl lysine isopeptide (Lys-Gly) (interchain with G-Cter in SUMO2).

Belongs to the UPF0461 family.

The sequence is that of UPF0461 protein C5orf24 (C5orf24) from Homo sapiens (Human).